The chain runs to 506 residues: Zinc finger and SCAN domain containing protein 4F (506 aa).

The tract at residues 1–24 (MASQQAPAKDLQTNNLEFTPTDSS) is disordered. Residues 37 to 119 (SAQLNFSPSN…RFMESLTDEC (83 aa)) enclose the SCAN box domain. 4 consecutive C2H2-type zinc fingers follow at residues 395–417 (YKCE…QRTH), 424–446 (LLCV…EIIH), 452–474 (FKCS…EMIH), and 480–503 (YVCS…RNYH).

As to expression, up-regulated in blastocyst outgrowths and is detectable in a mosaic fashion in ES cultures.

Its subcellular location is the nucleus. It is found in the chromosome. The protein localises to the telomere. In terms of biological role, transcription factor required to regulate early development. Binds telomeres and plays a key role in genomic stability by regulating telomere elongation. Acts as an activator of spontaneous telomere sister chromatid exchange (T-SCE) and telomere elongation. In Mus musculus (Mouse), this protein is Zinc finger and SCAN domain containing protein 4F (Zscan4f).